The sequence spans 72 residues: Large ribosomal subunit protein uL29 (72 aa).

Belongs to the universal ribosomal protein uL29 family.

This chain is Large ribosomal subunit protein uL29, found in Prochlorococcus marinus subsp. pastoris (strain CCMP1986 / NIES-2087 / MED4).